The sequence spans 304 residues: MNQYMEFYKLLGEFYNEEDITVDSPMSEHIYFRVGGPADILVTPVNEEQVVNTLKLCREYNVPYFILGNGSNILVKDGGISGVVIKFNKLNKITTEGNCVTAQSGALLKDVSKAALENNLRGFEFACGIPGSIGGAVFMNAGAYDGEMAHVIKSARVIDENCNIKNLTKEELELGYRSSIVMKKGYVVIEATVELESGEYASIKDKIDDLTNRRESKQPLEYPSAGSTFKRPEGYFAGKLIQDSGLKGFSIGGAAVSEKHSGFVINKGGATAKDVLDVIAHVQKTVKENFDVELHTEVRIIGRD.

Residues 33–198 (RVGGPADILV…IEATVELESG (166 aa)) enclose the FAD-binding PCMH-type domain. Arg177 is a catalytic residue. The active-site Proton donor is the Ser227. The active site involves Glu297.

It belongs to the MurB family. It depends on FAD as a cofactor.

It localises to the cytoplasm. The catalysed reaction is UDP-N-acetyl-alpha-D-muramate + NADP(+) = UDP-N-acetyl-3-O-(1-carboxyvinyl)-alpha-D-glucosamine + NADPH + H(+). Its pathway is cell wall biogenesis; peptidoglycan biosynthesis. In terms of biological role, cell wall formation. This is UDP-N-acetylenolpyruvoylglucosamine reductase from Clostridium perfringens (strain ATCC 13124 / DSM 756 / JCM 1290 / NCIMB 6125 / NCTC 8237 / Type A).